The following is a 145-amino-acid chain: Transcriptional regulator MraZ (145 aa).

2 SpoVT-AbrB domains span residues 5–49 (TYNH…LESE) and 78–121 (TYKI…AKEV).

The protein belongs to the MraZ family. As to quaternary structure, forms oligomers.

The protein resides in the cytoplasm. It is found in the nucleoid. This is Transcriptional regulator MraZ from Ureaplasma parvum serovar 3 (strain ATCC 27815 / 27 / NCTC 11736).